The chain runs to 156 residues: SsrA-binding protein (156 aa).

The interval 130-156 is disordered; that stretch reads KFDKRDDLKKKDAKRDIDRALRDKQKY. Residues 132-156 are compositionally biased toward basic and acidic residues; that stretch reads DKRDDLKKKDAKRDIDRALRDKQKY.

Belongs to the SmpB family.

Its subcellular location is the cytoplasm. Required for rescue of stalled ribosomes mediated by trans-translation. Binds to transfer-messenger RNA (tmRNA), required for stable association of tmRNA with ribosomes. tmRNA and SmpB together mimic tRNA shape, replacing the anticodon stem-loop with SmpB. tmRNA is encoded by the ssrA gene; the 2 termini fold to resemble tRNA(Ala) and it encodes a 'tag peptide', a short internal open reading frame. During trans-translation Ala-aminoacylated tmRNA acts like a tRNA, entering the A-site of stalled ribosomes, displacing the stalled mRNA. The ribosome then switches to translate the ORF on the tmRNA; the nascent peptide is terminated with the 'tag peptide' encoded by the tmRNA and targeted for degradation. The ribosome is freed to recommence translation, which seems to be the essential function of trans-translation. This chain is SsrA-binding protein, found in Exiguobacterium sibiricum (strain DSM 17290 / CCUG 55495 / CIP 109462 / JCM 13490 / 255-15).